The primary structure comprises 313 residues: Olfactory receptor 4M2 (313 aa).

Over 1-25 the chain is Cytoplasmic; that stretch reads METANYTKVTEFVLTGLSQTPEVQL. Residues 26-46 traverse the membrane as a helical segment; that stretch reads VLFVIFLSFYLFILPGNILII. Over 47-57 the chain is Extracellular; the sequence is CTISLDPHLTS. Residues 58 to 78 form a helical membrane-spanning segment; it reads PMYFLLANLAFLDIWYSSITA. The Cytoplasmic segment spans residues 79-97; the sequence is PEMLIDFFVERKIISFDEC. An intrachain disulfide couples C97 to C179. Residues 98 to 118 traverse the membrane as a helical segment; it reads IAQLFFLHFAGASEMFLLTVM. The Extracellular segment spans residues 119–142; the sequence is AFDLYTAICRPLHYATIMNQRLCC. A helical transmembrane segment spans residues 143–163; it reads ILVALSWRGGFIHSIIQVALI. The Cytoplasmic segment spans residues 164–204; it reads VRLPFCGPNELDSYFCDITQVVRIACANTFPEELVMICSSG. The chain crosses the membrane as a helical span at residues 205-225; it reads LISVVCLIALLMSYAFLLALL. Residues 226 to 238 lie on the Extracellular side of the membrane; the sequence is KKLSGSGENTNRA. Residues 239–259 traverse the membrane as a helical segment; that stretch reads VSTCYSHITIVVLMFGPSIYI. The Cytoplasmic segment spans residues 260-270; the sequence is YARPFDSFSLD. The chain crosses the membrane as a helical span at residues 271–291; sequence KVVSVFNTLIFPLHNPIIYTL. The Extracellular portion of the chain corresponds to 292–313; the sequence is RNKEVKAAMRKLVTKYILCKEK.

This sequence belongs to the G-protein coupled receptor 1 family.

The protein resides in the membrane. Functionally, odorant receptor. The chain is Olfactory receptor 4M2 from Homo sapiens (Human).